Here is a 193-residue protein sequence, read N- to C-terminus: 3-isopropylmalate dehydratase small subunit (193 aa).

Belongs to the LeuD family. LeuD type 1 subfamily. Heterodimer of LeuC and LeuD.

It catalyses the reaction (2R,3S)-3-isopropylmalate = (2S)-2-isopropylmalate. The protein operates within amino-acid biosynthesis; L-leucine biosynthesis; L-leucine from 3-methyl-2-oxobutanoate: step 2/4. Catalyzes the isomerization between 2-isopropylmalate and 3-isopropylmalate, via the formation of 2-isopropylmaleate. The protein is 3-isopropylmalate dehydratase small subunit of Bacillus cytotoxicus (strain DSM 22905 / CIP 110041 / 391-98 / NVH 391-98).